The chain runs to 48 residues: Protein TUNAR (48 aa).

A disordered region spans residues 1–20 (MVITSGNDEDRGGQEKESKE). Basic and acidic residues predominate over residues 8 to 20 (DEDRGGQEKESKE). The helical transmembrane segment at 24–44 (LAMLGIIGTILNLIVIIFVYI) threads the bilayer.

Interacts with ATPase ATP2A2/SERCA2. Interacts with ATPase ATP2A3/SERCA3; the interaction occurs at low levels in low glucose conditions and is increased by high glucose levels. In the adult, expressed in Purkinje cells in the cerebellum, in motor neurons and interneurons in the spinal cord and in neurons of the cortex, hippocampus and thalamus (at protein level). Also detected in the developing cortex, hippocampus and thalamus at embryonic day E15.5 (at protein level).

Its subcellular location is the endoplasmic reticulum membrane. The protein resides in the extracellular vesicle membrane. In terms of biological role, in neurons, plays a role in the regulation of intracellular Ca(2+), possibly by acting as an activator of ATP2A2/SERCA2, thus increasing the efficiency with which Ca(2+) is removed from the cytoplasm. Inhibits differentiation of embryonic stem cells into neurons and inhibits neurite outgrowth, likely as a result of its role in intracellular Ca(2+) regulation. In pancreatic beta cells, lowers Ca(2+) levels in the endoplasmic reticulum and enhances glucose-stimulated insulin secretion. The polypeptide is Protein TUNAR (Mus musculus (Mouse)).